Consider the following 391-residue polypeptide: ATP phosphoribosyltransferase regulatory subunit (391 aa).

The protein belongs to the class-II aminoacyl-tRNA synthetase family. HisZ subfamily. Heteromultimer composed of HisG and HisZ subunits.

It localises to the cytoplasm. It participates in amino-acid biosynthesis; L-histidine biosynthesis; L-histidine from 5-phospho-alpha-D-ribose 1-diphosphate: step 1/9. Required for the first step of histidine biosynthesis. May allow the feedback regulation of ATP phosphoribosyltransferase activity by histidine. The sequence is that of ATP phosphoribosyltransferase regulatory subunit from Prochlorococcus marinus (strain NATL1A).